Consider the following 568-residue polypeptide: Urease subunit alpha (568 aa).

The 439-residue stretch at 130–568 (GGIDTHIHFI…LPMAQRYFLF (439 aa)) folds into the Urease domain. Ni(2+) is bound by residues histidine 135, histidine 137, and lysine 218. Position 218 is an N6-carboxylysine (lysine 218). Histidine 220 serves as a coordination point for substrate. The Ni(2+) site is built by histidine 247 and histidine 273. Residue histidine 321 is the Proton donor of the active site. Aspartate 361 contacts Ni(2+).

This sequence belongs to the metallo-dependent hydrolases superfamily. Urease alpha subunit family. In terms of assembly, heterotrimer of UreA (gamma), UreB (beta) and UreC (alpha) subunits. Three heterotrimers associate to form the active enzyme. Ni cation serves as cofactor. Post-translationally, carboxylation allows a single lysine to coordinate two nickel ions.

It is found in the cytoplasm. The catalysed reaction is urea + 2 H2O + H(+) = hydrogencarbonate + 2 NH4(+). The protein operates within nitrogen metabolism; urea degradation; CO(2) and NH(3) from urea (urease route): step 1/1. This is Urease subunit alpha from Burkholderia orbicola (strain MC0-3).